Reading from the N-terminus, the 685-residue chain is Transforming growth factor beta activator LRRC33 (685 aa).

The signal sequence occupies residues 1-27 (MPVCGCLSVVLSHAVVLLMLVLHSASG). The Extracellular segment spans residues 28 to 640 (HPQTFPCRLI…CGFTNNNKES (613 aa)). Residues 29-56 (PQTFPCRLIQRVALCSGRQLSVIPDCLP) form the LRRNT domain. LRR repeat units lie at residues 57-79 (HETEEIFFDRNLLENLQDGLSRY), 80-102 (PFLRMFSCANNQLMTVAETAFIE), 103-129 (SHLLENLNLANNELHHGHKQVAQAFRS), 130-154 (LTQLKTLDLSGNGLSEDMVSVLVAN), 155-178 (LSSLESLYLSRNGMQRLDESTFRD), 180-201 (HQLKELNVERNLLFEISGAFDH), and 202-225 (MKKLQRLNLAFNCLPCLVNFEMTQ). N154 carries N-linked (GlcNAc...) asparagine glycosylation. N230 and N244 each carry an N-linked (GlcNAc...) asparagine glycan. 2 LRR repeats span residues 248 to 271 (TFQLETLDLSDNHLLFFPFLPTNN) and 273 to 296 (IRTLLLSNNRVGFYQHLANSTSSN). N-linked (GlcNAc...) asparagine glycans are attached at residues N291, N296, N309, N312, and N325. LRR repeat units lie at residues 326–349 (LSSVEFLDLSENKVNYFPQGFIKQ), 351–373 (PQLYWLKLRSNCLQSFSLTSEDL), 374–397 (PVTIYELDVSRNRLTEIKASQTSK), 400–423 (LNNLTHLNLSTNDLQNFPPMIFTS), 425–447 (PNLNTLDLSHNTVDVCYSSNYMG), 457–480 (MASLKQLYLADCSIQNVPSSAFKG), 482–503 (SLTHLELSNNPNLHLKQQSLKG), 505–526 (ANTLQHLGIGNTGLQDFDFSPY), 527–549 (TNLKSLNISRNSLSKLPDSLMAL), 551–571 (LKLLDLRDNSLTTIKSEHASL), and 573–596 (AKKLQTVYMNGNAFNCCHLDWFRT). 2 N-linked (GlcNAc...) asparagine glycosylation sites follow: N402 and N407. An N-linked (GlcNAc...) asparagine glycan is attached at N533. The LRRCT domain occupies 597–635 (FGENKGIHVADLSEITCLDLNYRRHKVVLTDAVYCGFTN). Residues 641 to 661 (VVWYILLFVTVSVSIMGISVI) form a helical membrane-spanning segment. Topologically, residues 662–685 (YMLTFKPRMLPRVIKKKCWRPTSY) are cytoplasmic.

This sequence belongs to the LRRC32/LRRC33 family.

The protein localises to the cell membrane. Its subcellular location is the endoplasmic reticulum membrane. Its function is as follows. Key regulator of transforming growth factor beta-1 (TGFB1) specifically required for microglia function in the nervous system. Required for activation of latent TGF-beta-1 in macrophages and microglia: associates specifically via disulfide bonds with the Latency-associated peptide (LAP), which is the regulatory chain of TGFB1, and regulates integrin-dependent activation of TGF-beta-1. TGF-beta-1 activation mediated by lrrc33/nrros is highly localized: there is little spreading of TGF-beta-1 activated from one microglial cell to neighboring microglia, suggesting the existence of localized and selective activation of TGF-beta-1 by lrrc33/nrros. The protein is Transforming growth factor beta activator LRRC33 of Danio rerio (Zebrafish).